The following is an 892-amino-acid chain: LEAF RUST 10 DISEASE-RESISTANCE LOCUS RECEPTOR-LIKE PROTEIN KINASE-like 2.8 (892 aa).

The first 27 residues, 1–27 (MYYHSLSSYSILFFLFSLFHHLPCASS), serve as a signal peptide directing secretion. At 28–496 (NQGLGWCESL…RFIATLVRYT (469 aa)) the chain is on the extracellular side. N-linked (GlcNAc...) asparagine glycosylation is found at Asn42, Asn71, Asn88, Asn112, Asn186, Asn222, Asn230, Asn286, Asn358, Asn384, Asn407, and Asn458. The chain crosses the membrane as a helical span at residues 497–517 (FIALGALTGVVIVFLVLLCPC). The Cytoplasmic portion of the chain corresponds to 518 to 892 (FRVQIFRKRK…TNSKLESSSL (375 aa)). Phosphothreonine is present on Thr547. The 299-residue stretch at 556–854 (KSFTEVVGRG…ALEVPPRPVL (299 aa)) folds into the Protein kinase domain. Residues 562-570 (VGRGGFGIV) and Lys584 contribute to the ATP site. Tyr629 is modified (phosphotyrosine). Residue Asp680 is the Proton acceptor of the active site. Phosphothreonine is present on residues Thr717 and Thr720.

The protein belongs to the protein kinase superfamily. Ser/Thr protein kinase family.

Its subcellular location is the membrane. It catalyses the reaction L-seryl-[protein] + ATP = O-phospho-L-seryl-[protein] + ADP + H(+). The catalysed reaction is L-threonyl-[protein] + ATP = O-phospho-L-threonyl-[protein] + ADP + H(+). This Arabidopsis thaliana (Mouse-ear cress) protein is LEAF RUST 10 DISEASE-RESISTANCE LOCUS RECEPTOR-LIKE PROTEIN KINASE-like 2.8.